A 155-amino-acid polypeptide reads, in one-letter code: SsrA-binding protein (155 aa).

The span at 135–147 (TIKRRDQERDIKK) shows a compositional bias: basic and acidic residues. Residues 135 to 155 (TIKRRDQERDIKKQMKHYNAR) are disordered.

The protein belongs to the SmpB family.

It is found in the cytoplasm. Required for rescue of stalled ribosomes mediated by trans-translation. Binds to transfer-messenger RNA (tmRNA), required for stable association of tmRNA with ribosomes. tmRNA and SmpB together mimic tRNA shape, replacing the anticodon stem-loop with SmpB. tmRNA is encoded by the ssrA gene; the 2 termini fold to resemble tRNA(Ala) and it encodes a 'tag peptide', a short internal open reading frame. During trans-translation Ala-aminoacylated tmRNA acts like a tRNA, entering the A-site of stalled ribosomes, displacing the stalled mRNA. The ribosome then switches to translate the ORF on the tmRNA; the nascent peptide is terminated with the 'tag peptide' encoded by the tmRNA and targeted for degradation. The ribosome is freed to recommence translation, which seems to be the essential function of trans-translation. The chain is SsrA-binding protein from Streptococcus pyogenes serotype M6 (strain ATCC BAA-946 / MGAS10394).